We begin with the raw amino-acid sequence, 322 residues long: HPr kinase/phosphorylase (322 aa).

Residues H146 and K167 contribute to the active site. Residue 161–168 coordinates ATP; the sequence is GDSGLGKS. Residue S168 participates in Mg(2+) binding. D185 (proton acceptor; for phosphorylation activity. Proton donor; for dephosphorylation activity) is an active-site residue. The tract at residues 209–218 is important for the catalytic mechanism of both phosphorylation and dephosphorylation; that stretch reads LEVRGLGLLD. Position 210 (E210) interacts with Mg(2+). Residue R250 is part of the active site. The tract at residues 271 to 276 is important for the catalytic mechanism of dephosphorylation; that stretch reads QVAAGR.

The protein belongs to the HPrK/P family. As to quaternary structure, homohexamer. Requires Mg(2+) as cofactor.

It catalyses the reaction [HPr protein]-L-serine + ATP = [HPr protein]-O-phospho-L-serine + ADP + H(+). The enzyme catalyses [HPr protein]-O-phospho-L-serine + phosphate + H(+) = [HPr protein]-L-serine + diphosphate. Functionally, catalyzes the ATP- as well as the pyrophosphate-dependent phosphorylation of a specific serine residue in HPr, a phosphocarrier protein of the phosphoenolpyruvate-dependent sugar phosphotransferase system (PTS). HprK/P also catalyzes the pyrophosphate-producing, inorganic phosphate-dependent dephosphorylation (phosphorolysis) of seryl-phosphorylated HPr (P-Ser-HPr). In Paraburkholderia phytofirmans (strain DSM 17436 / LMG 22146 / PsJN) (Burkholderia phytofirmans), this protein is HPr kinase/phosphorylase.